The following is a 286-amino-acid chain: MYLQDVIMKLNDFWASKGCLLEQPYDMEVGAGTFHPATFFGSLRKGLWKVAYVQPSRRPTDGRYGENPNRLQRYFQYQVIIKPSPENSQELYLESLEYLGINLKEHDIRFVEDNWESPTLGAWGVGWEVWLDGMEITQFTYFQQIGGISLKDIPLEITYGLERIAMYLQGVDNVYEVQWNENVKYGDVFLENEREFSVFNFEEANVGLLFRHFDEYEKEFYRLVEKNLYLPAYDYVLKCSHTFNLLDARGAISVSQRQTYVKRIQAMARKVARVFLEVQVNENSPA.

It belongs to the class-II aminoacyl-tRNA synthetase family. As to quaternary structure, tetramer of two alpha and two beta subunits.

It localises to the cytoplasm. The enzyme catalyses tRNA(Gly) + glycine + ATP = glycyl-tRNA(Gly) + AMP + diphosphate. This is Glycine--tRNA ligase alpha subunit from Thermotoga petrophila (strain ATCC BAA-488 / DSM 13995 / JCM 10881 / RKU-1).